The sequence spans 147 residues: Deoxyuridine 5'-triphosphate nucleotidohydrolase (147 aa).

R24 contributes to the Mg(2+) binding site. Residues P68–S70, G82–D85, Y88, G93, I95, and R111 each bind dUTP.

It belongs to the dUTPase family. It depends on Mg(2+) as a cofactor.

The catalysed reaction is dUTP + H2O = dUMP + diphosphate + H(+). Its function is as follows. This enzyme is involved in nucleotide metabolism: it produces dUMP, the immediate precursor of thymidine nucleotides and it decreases the intracellular concentration of dUTP so that uracil cannot be incorporated into DNA. This Oryctolagus cuniculus (Rabbit) protein is Deoxyuridine 5'-triphosphate nucleotidohydrolase (OPG046).